A 227-amino-acid chain; its full sequence is PKHD-type hydroxylase Bxeno_B2194 (227 aa).

The 101-residue stretch at 78-178 folds into the Fe2OG dioxygenase domain; it reads KVFPPLFNRY…RVASFFWIQS (101 aa). Residues histidine 96, aspartate 98, and histidine 159 each coordinate Fe cation. Residue arginine 169 participates in 2-oxoglutarate binding.

Fe(2+) serves as cofactor. The cofactor is L-ascorbate.

The chain is PKHD-type hydroxylase Bxeno_B2194 from Paraburkholderia xenovorans (strain LB400).